Reading from the N-terminus, the 177-residue chain is Putative 3-methyladenine DNA glycosylase (177 aa).

Belongs to the DNA glycosylase MPG family.

The sequence is that of Putative 3-methyladenine DNA glycosylase from Rickettsia felis (strain ATCC VR-1525 / URRWXCal2) (Rickettsia azadi).